The sequence spans 389 residues: S-adenosylmethionine synthase (389 aa).

His-19 lines the ATP pocket. Asp-21 is a binding site for Mg(2+). Glu-47 serves as a coordination point for K(+). L-methionine contacts are provided by Glu-60 and Gln-103. The interval 103-113 (QSGDIAQGVDR) is flexible loop. ATP-binding positions include 168 to 170 (DGK), 234 to 235 (RF), Asp-243, 249 to 250 (RK), Ala-266, and Lys-270. Asp-243 lines the L-methionine pocket. Residue Lys-274 coordinates L-methionine.

It belongs to the AdoMet synthase family. In terms of assembly, homotetramer; dimer of dimers. Requires Mg(2+) as cofactor. K(+) serves as cofactor.

The protein localises to the cytoplasm. It catalyses the reaction L-methionine + ATP + H2O = S-adenosyl-L-methionine + phosphate + diphosphate. It functions in the pathway amino-acid biosynthesis; S-adenosyl-L-methionine biosynthesis; S-adenosyl-L-methionine from L-methionine: step 1/1. Catalyzes the formation of S-adenosylmethionine (AdoMet) from methionine and ATP. The overall synthetic reaction is composed of two sequential steps, AdoMet formation and the subsequent tripolyphosphate hydrolysis which occurs prior to release of AdoMet from the enzyme. The polypeptide is S-adenosylmethionine synthase (Nitratidesulfovibrio vulgaris (strain DSM 19637 / Miyazaki F) (Desulfovibrio vulgaris)).